The following is a 364-amino-acid chain: Programmed cell death protein 2-like (364 aa).

The residue at position 2 (Ala-2) is an N-acetylalanine. Residues 125-150 (EGSQDWGSDTEETPPPPASDLGSDSN) form a disordered region.

In terms of biological role, over-expression suppresses AP1, CREB, NFAT, and NF-kB transcriptional activation, and delays cell cycle progression at S phase. The sequence is that of Programmed cell death protein 2-like (Pdcd2l) from Mus musculus (Mouse).